We begin with the raw amino-acid sequence, 98 residues long: Small ribosomal subunit protein bS20 (98 aa).

The protein belongs to the bacterial ribosomal protein bS20 family.

Binds directly to 16S ribosomal RNA. This chain is Small ribosomal subunit protein bS20, found in Prochlorococcus marinus (strain NATL1A).